We begin with the raw amino-acid sequence, 407 residues long: Probable endo-beta-1,4-glucanase celB (407 aa).

Residues 1-18 (MALTLAATALVLLPLVTA) form the signal peptide. Asn136 is a glycosylation site (N-linked (GlcNAc...) asparagine). Glu216 serves as the catalytic Nucleophile. Glu221 serves as the catalytic Proton donor.

The protein belongs to the glycosyl hydrolase 7 (cellulase C) family.

It localises to the secreted. The catalysed reaction is Endohydrolysis of (1-&gt;4)-beta-D-glucosidic linkages in cellulose, lichenin and cereal beta-D-glucans.. In terms of biological role, has endoglucanase activity on substrates containing beta-1,4 glycosidic bonds, like in carboxymethylcellulose (CMC), hydroxyethylcellulose (HEC) and beta-glucan. Involved in the degradation of complex natural cellulosic substrates. This Neosartorya fischeri (strain ATCC 1020 / DSM 3700 / CBS 544.65 / FGSC A1164 / JCM 1740 / NRRL 181 / WB 181) (Aspergillus fischerianus) protein is Probable endo-beta-1,4-glucanase celB (celB).